The sequence spans 123 residues: UPF0102 protein PSEEN4497 (123 aa).

The protein belongs to the UPF0102 family.

The polypeptide is UPF0102 protein PSEEN4497 (Pseudomonas entomophila (strain L48)).